The chain runs to 201 residues: Putative toxin HigB2 (201 aa).

The protein belongs to the mycobacterial HigB family.

In terms of biological role, putative toxic component of a type II toxin-antitoxin (TA) system. Its cognate antitoxin would be HigA2. The protein is Putative toxin HigB2 of Mycobacterium tuberculosis (strain ATCC 25618 / H37Rv).